Reading from the N-terminus, the 410-residue chain is Structure-specific endonuclease subunit SLX1 homolog (410 aa).

Residues 6 to 89 (QLHYCYFLLS…NICKVTRDNI (84 aa)) form the GIY-YIG domain.

Belongs to the SLX1 family. In terms of assembly, forms a heterodimer with a member of the SLX4 family. It depends on a divalent metal cation as a cofactor.

It localises to the nucleus. Functionally, catalytic subunit of a heterodimeric structure-specific endonuclease that resolves DNA secondary structures generated during DNA repair and recombination. Has endonuclease activity towards branched DNA substrates, introducing single-strand cuts in duplex DNA close to junctions with ss-DNA. This chain is Structure-specific endonuclease subunit SLX1 homolog, found in Cryptosporidium parvum (strain Iowa II).